The chain runs to 201 residues: Glutathione peroxidase 1 (201 aa).

Ser-32 carries the post-translational modification Phosphoserine. Residue Sec-47 is part of the active site. Residue Sec-47 is a non-standard amino acid, selenocysteine. Residues Lys-86 and Lys-112 each carry the N6-acetyllysine; alternate modification. Lys-86 and Lys-112 each carry N6-succinyllysine; alternate. Lys-119 bears the N6-acetyllysine mark. Lys-146 carries the post-translational modification N6-acetyllysine; alternate. Position 146 is an N6-succinyllysine; alternate (Lys-146). 2 positions are modified to phosphoserine: Ser-195 and Ser-199.

It belongs to the glutathione peroxidase family. As to quaternary structure, homotetramer. Interacts with MIEN1. In terms of processing, during periods of oxidative stress, Sec-47 may react with a superoxide radical, irreversibly lose hydroselenide and be converted to dehydroalanine. In terms of tissue distribution, expressed in liver and lung.

Its subcellular location is the cytoplasm. The protein resides in the mitochondrion. The enzyme catalyses 2 glutathione + H2O2 = glutathione disulfide + 2 H2O. The catalysed reaction is a hydroperoxy polyunsaturated fatty acid + 2 glutathione = a hydroxy polyunsaturated fatty acid + glutathione disulfide + H2O. It catalyses the reaction tert-butyl hydroperoxide + 2 glutathione = tert-butanol + glutathione disulfide + H2O. It carries out the reaction cumene hydroperoxide + 2 glutathione = 2-phenylpropan-2-ol + glutathione disulfide + H2O. The enzyme catalyses (13S)-hydroperoxy-(9Z,11E)-octadecadienoate + 2 glutathione = (13S)-hydroxy-(9Z,11E)-octadecadienoate + glutathione disulfide + H2O. The catalysed reaction is (9S)-hydroperoxy-(10E,12Z)-octadecadienoate + 2 glutathione = (9S)-hydroxy-(10E,12Z)-octadecadienoate + glutathione disulfide + H2O. It catalyses the reaction (5S)-hydroperoxy-(6E,8Z,11Z,14Z)-eicosatetraenoate + 2 glutathione = (5S)-hydroxy-(6E,8Z,11Z,14Z)-eicosatetraenoate + glutathione disulfide + H2O. It carries out the reaction (12S)-hydroperoxy-(5Z,8Z,10E,14Z)-eicosatetraenoate + 2 glutathione = (12S)-hydroxy-(5Z,8Z,10E,14Z)-eicosatetraenoate + glutathione disulfide + H2O. The enzyme catalyses (12R)-hydroperoxy-(5Z,8Z,10E,14Z)-eicosatetraenoate + 2 glutathione = (12R)-hydroxy-(5Z,8Z,10E,14Z)-eicosatetraenoate + glutathione disulfide + H2O. The catalysed reaction is (15S)-hydroperoxy-(5Z,8Z,11Z,13E)-eicosatetraenoate + 2 glutathione = (15S)-hydroxy-(5Z,8Z,11Z,13E)-eicosatetraenoate + glutathione disulfide + H2O. It catalyses the reaction (5S)-hydroperoxy-(6E,8Z,11Z,14Z,17Z)-eicosapentaenoate + 2 glutathione = (5S)-hydroxy-(6E,8Z,11Z,14Z,17Z)-eicosapentaenoate + glutathione disulfide + H2O. It carries out the reaction (12S)-hydroperoxy-(5Z,8Z,10E,14Z,17Z)-eicosapentaenoate + 2 glutathione = (12S)-hydroxy-(5Z,8Z,10E,14Z,17Z)-eicosapentaenoate + glutathione disulfide + H2O. The enzyme catalyses (15S)-hydroperoxy-(5Z,8Z,11Z,13E,17Z)-eicosapentaenoate + 2 glutathione = (15S)-hydroxy-(5Z,8Z,11Z,13E,17Z)-eicosapentaenoate + glutathione disulfide + H2O. The catalysed reaction is (15S)-hydroperoxy-(11Z,13E)-eicosadienoate + 2 glutathione = (15S)-hydroxy-(11Z,13E)-eicosadienoate + glutathione disulfide + H2O. It catalyses the reaction (17S)-hydroperoxy-(4Z,7Z,10Z,13Z,15E,19Z)-docosahexaenoate + 2 glutathione = (17S)-hydroxy-(4Z,7Z,10Z,13Z,15E,19Z)-docosahexaenoate + glutathione disulfide + H2O. Catalyzes the reduction of hydroperoxides in a glutathione-dependent manner thus regulating cellular redox homeostasis. Can reduce small soluble hydroperoxides such as H2O2, cumene hydroperoxide and tert-butyl hydroperoxide, as well as several fatty acid-derived hydroperoxides. In platelets catalyzes the reduction of 12-hydroperoxyeicosatetraenoic acid, the primary product of the arachidonate 12-lipoxygenase pathway. The sequence is that of Glutathione peroxidase 1 from Rattus norvegicus (Rat).